Here is a 449-residue protein sequence, read N- to C-terminus: Agmatine hydroxycinnamoyltransferase 1 (449 aa).

Active-site proton acceptor residues include histidine 153 and aspartate 392.

This sequence belongs to the plant acyltransferase family. As to expression, highly expressed in roots. Expressed at low levels in flowers.

Functionally, hydroxycinnamoyl transferase that catalyzes the transfer of an acyl from p-coumaryol-CoA to agmatine, to produce coumaroyl agmatine. Can use feruloyl-CoA, caffeoyl-CoA and sinapoyl-CoA as acyl donors. Seems to be able to transfer the acyl group from p-coumaroyl-CoA and feruloyl-CoA to the acyl acceptors putrescine and spermidine. The protein is Agmatine hydroxycinnamoyltransferase 1 of Oryza sativa subsp. japonica (Rice).